The primary structure comprises 553 residues: Formate--tetrahydrofolate ligase (553 aa).

56–63 (TPKGEGKT) contacts ATP.

This sequence belongs to the formate--tetrahydrofolate ligase family.

The catalysed reaction is (6S)-5,6,7,8-tetrahydrofolate + formate + ATP = (6R)-10-formyltetrahydrofolate + ADP + phosphate. The protein operates within one-carbon metabolism; tetrahydrofolate interconversion. The chain is Formate--tetrahydrofolate ligase from Haloarcula marismortui (strain ATCC 43049 / DSM 3752 / JCM 8966 / VKM B-1809) (Halobacterium marismortui).